The following is a 465-amino-acid chain: MRRAAGMEDFSAEEEESWYDQQDLEQDLHLAAELGKTLLERNKELEGSLQQMYSTNEEQVQEIEYLTKQLDTLRHVNEQHAKVYEQLDLTARDLELTNHRLVLESKAAQQKIHGLTETIERLQAQVEELQAQVEQLRGLEQLRVLREKRERRRTIHTFPCLKELCTSPRCKDAFRLHSSSLELGPRPLEQENERLQTLVGALRSQVSQERQRKERAEREYTAVLQEYSELERQLCEMEACRLRVQELEAELLELQQMKQAKTYLLGPDDHLAEALLAPLTQAPEADDPQPGRGDDLGAQDGVSSPAASPGHVVRKSCSDTALNAIVAKDPASRHAGNLTLHANSVRKRGMSILREVDEQYHALLEKYEELLSKCRQHGAGVRHAGVQTSRPISRDSSWRDLRGGEEGQGEVKAGEKSLSQHVEAVDKRLEQSQPEYKALFKEIFSRIQKTKADINATKVKTHSSK.

Coiled-coil stretches lie at residues 38 to 143 (LLER…EQLR) and 188 to 265 (LEQE…TYLL). The disordered stretch occupies residues 282–314 (APEADDPQPGRGDDLGAQDGVSSPAASPGHVVR). 3 positions are modified to phosphoserine: S308, S318, and S344. Residues 350–377 (MSILREVDEQYHALLEKYEELLSKCRQH) are a coiled coil. A disordered region spans residues 382 to 417 (RHAGVQTSRPISRDSSWRDLRGGEEGQGEVKAGEKS). Residues 392-405 (ISRDSSWRDLRGGE) are compositionally biased toward basic and acidic residues.

Belongs to the CDR2 family.

This is Cerebellar degeneration-related protein 2-like (CDR2L) from Homo sapiens (Human).